The following is a 430-amino-acid chain: Trigger factor (430 aa).

Positions 157–242 (GDLVALETWS…AVEVSEPVLP (86 aa)) constitute a PPIase FKBP-type domain.

It belongs to the FKBP-type PPIase family. Tig subfamily.

It localises to the cytoplasm. The catalysed reaction is [protein]-peptidylproline (omega=180) = [protein]-peptidylproline (omega=0). Involved in protein export. Acts as a chaperone by maintaining the newly synthesized protein in an open conformation. Functions as a peptidyl-prolyl cis-trans isomerase. This is Trigger factor from Xanthomonas oryzae pv. oryzae (strain PXO99A).